We begin with the raw amino-acid sequence, 244 residues long: Small ribosomal subunit protein eS4 (244 aa).

Positions 43–106 (LPLLLIVRDT…NENYLVLFDE (64 aa)) constitute an S4 RNA-binding domain.

It belongs to the eukaryotic ribosomal protein eS4 family.

The polypeptide is Small ribosomal subunit protein eS4 (rps4e) (Methanococcus vannielii).